A 563-amino-acid polypeptide reads, in one-letter code: Protein NRT1/ PTR FAMILY 5.9 (563 aa).

Residues 56–76 traverse the membrane as a helical segment; it reads TWAGFTSMLPLFSAPLADTYW. Thr-81 bears the Phosphothreonine mark. 10 consecutive transmembrane segments (helical) span residues 82 to 102, 110 to 130, 168 to 188, 194 to 214, 317 to 337, 362 to 382, 394 to 414, 441 to 461, 479 to 499, and 528 to 548; these read ILAS…TAFA, TISS…LGVL, FFQL…TVMA, FGWV…ILVF, FPIW…ATFF, TITL…IPIT, VMER…IAAI, IFWL…TVVG, FALY…LISI, and WLLA…CKFF.

Belongs to the major facilitator superfamily. Proton-dependent oligopeptide transporter (POT/PTR) (TC 2.A.17) family. As to expression, expressed in roots and flowers.

Its subcellular location is the membrane. This chain is Protein NRT1/ PTR FAMILY 5.9 (NPF5.9), found in Arabidopsis thaliana (Mouse-ear cress).